The sequence spans 295 residues: Sulfotransferase 1E1 (295 aa).

A 3'-phosphoadenylyl sulfate-binding site is contributed by 48 to 53 (KSGTTW). Residue 106–108 (KTH) coordinates substrate. The Proton acceptor role is filled by histidine 108. Arginine 130 and serine 138 together coordinate 3'-phosphoadenylyl sulfate. Position 156 is a phosphoserine (serine 156). Residues tyrosine 193, 227 to 232 (TSFQEM), and 257 to 259 (RKG) contribute to the 3'-phosphoadenylyl sulfate site.

The protein belongs to the sulfotransferase 1 family. As to quaternary structure, homodimer. Testis and at very low level in the placenta.

It is found in the cytoplasm. It localises to the cytosol. The enzyme catalyses estrone + 3'-phosphoadenylyl sulfate = estrone 3-sulfate + adenosine 3',5'-bisphosphate + H(+). It carries out the reaction 17beta-estradiol + 3'-phosphoadenylyl sulfate = 17beta-estradiol 3-sulfate + adenosine 3',5'-bisphosphate + H(+). The catalysed reaction is (24S)-hydroxycholesterol + 3'-phosphoadenylyl sulfate = (24S)-hydroxycholesterol 3-sulfate + adenosine 3',5'-bisphosphate + H(+). It catalyses the reaction 3beta-hydroxyandrost-5-en-17-one + 3'-phosphoadenylyl sulfate = dehydroepiandrosterone 3-sulfate + adenosine 3',5'-bisphosphate + H(+). The enzyme catalyses 4-ethylphenol + 3'-phosphoadenylyl sulfate = 4-ethylphenyl sulfate + adenosine 3',5'-bisphosphate + H(+). Inhibited by estradiol. Its function is as follows. Sulfotransferase that utilizes 3'-phospho-5'-adenylyl sulfate (PAPS) as sulfonate donor to catalyze the sulfate conjugation of estradiol and estrone. Is a key enzyme in estrogen homeostasis, the sulfation of estrogens leads to their inactivation. Also sulfates dehydroepiandrosterone, pregnenolone, (24S)-hydroxycholesterol and xenobiotic compounds like ethinylestradiol, equalenin, diethyl stilbesterol and 1-naphthol at significantly lower efficiency. Does not sulfonate cortisol, testosterone and dopamine. May play a role in gut microbiota-host metabolic interaction. O-sulfonates 4-ethylphenol (4-EP), a dietary tyrosine-derived metabolite produced by gut bacteria. The product 4-EPS crosses the blood-brain barrier and may negatively regulate oligodendrocyte maturation and myelination, affecting the functional connectivity of different brain regions associated with the limbic system. In Mus musculus (Mouse), this protein is Sulfotransferase 1E1 (Sult1e1).